The following is a 345-amino-acid chain: Centromere protein L (345 aa).

A phosphoserine mark is found at serine 40 and serine 54.

This sequence belongs to the CENP-L/IML3 family. As to quaternary structure, component of the CENPA-CAD complex, composed of CENPI, CENPK, CENPL, CENPO, CENPP, CENPQ, CENPR and CENPS. The CENPA-CAD complex interacts with the CENPA-NAC complex, at least composed of CENPA, CENPC, CENPH, CENPM, CENPN, CENPT and CENPU.

It localises to the nucleus. The protein resides in the chromosome. The protein localises to the centromere. Its function is as follows. Component of the CENPA-CAD (nucleosome distal) complex, a complex recruited to centromeres which is involved in assembly of kinetochore proteins, mitotic progression and chromosome segregation. May be involved in incorporation of newly synthesized CENPA into centromeres via its interaction with the CENPA-NAC complex. The polypeptide is Centromere protein L (Cenpl) (Rattus norvegicus (Rat)).